The following is a 187-amino-acid chain: Peptidyl-tRNA hydrolase (187 aa).

Tyr-15 provides a ligand contact to tRNA. The active-site Proton acceptor is His-20. TRNA-binding residues include Phe-65, Asn-67, and Asn-113.

Belongs to the PTH family. In terms of assembly, monomer.

Its subcellular location is the cytoplasm. The enzyme catalyses an N-acyl-L-alpha-aminoacyl-tRNA + H2O = an N-acyl-L-amino acid + a tRNA + H(+). Functionally, hydrolyzes ribosome-free peptidyl-tRNAs (with 1 or more amino acids incorporated), which drop off the ribosome during protein synthesis, or as a result of ribosome stalling. Its function is as follows. Catalyzes the release of premature peptidyl moieties from peptidyl-tRNA molecules trapped in stalled 50S ribosomal subunits, and thus maintains levels of free tRNAs and 50S ribosomes. The polypeptide is Peptidyl-tRNA hydrolase (Elusimicrobium minutum (strain Pei191)).